Consider the following 348-residue polypeptide: Methylthioribose-1-phosphate isomerase (348 aa).

Substrate-binding positions include 48–50 (RGA), Arg-90, and Gln-195. Asp-236 serves as the catalytic Proton donor. 246-247 (NK) contributes to the substrate binding site.

It belongs to the eIF-2B alpha/beta/delta subunits family. MtnA subfamily.

The catalysed reaction is 5-(methylsulfanyl)-alpha-D-ribose 1-phosphate = 5-(methylsulfanyl)-D-ribulose 1-phosphate. Its pathway is amino-acid biosynthesis; L-methionine biosynthesis via salvage pathway; L-methionine from S-methyl-5-thio-alpha-D-ribose 1-phosphate: step 1/6. Functionally, catalyzes the interconversion of methylthioribose-1-phosphate (MTR-1-P) into methylthioribulose-1-phosphate (MTRu-1-P). The chain is Methylthioribose-1-phosphate isomerase from Exiguobacterium sibiricum (strain DSM 17290 / CCUG 55495 / CIP 109462 / JCM 13490 / 255-15).